Reading from the N-terminus, the 252-residue chain is Enolase-phosphatase E1 (252 aa).

The Mg(2+) site is built by D14 and E16. Residues 143-144 and K177 contribute to the substrate site; that span reads SS. Residue D202 participates in Mg(2+) binding.

This sequence belongs to the HAD-like hydrolase superfamily. MasA/MtnC family. In terms of assembly, monomer. The cofactor is Mg(2+).

It is found in the cytoplasm. The protein localises to the nucleus. It carries out the reaction 5-methylsulfanyl-2,3-dioxopentyl phosphate + H2O = 1,2-dihydroxy-5-(methylsulfanyl)pent-1-en-3-one + phosphate. It participates in amino-acid biosynthesis; L-methionine biosynthesis via salvage pathway; L-methionine from S-methyl-5-thio-alpha-D-ribose 1-phosphate: step 3/6. It functions in the pathway amino-acid biosynthesis; L-methionine biosynthesis via salvage pathway; L-methionine from S-methyl-5-thio-alpha-D-ribose 1-phosphate: step 4/6. Its function is as follows. Bifunctional enzyme that catalyzes the enolization of 2,3-diketo-5-methylthiopentyl-1-phosphate (DK-MTP-1-P) into the intermediate 2-hydroxy-3-keto-5-methylthiopentenyl-1-phosphate (HK-MTPenyl-1-P), which is then dephosphorylated to form the acireductone 1,2-dihydroxy-3-keto-5-methylthiopentene (DHK-MTPene). The sequence is that of Enolase-phosphatase E1 from Drosophila pseudoobscura pseudoobscura (Fruit fly).